The primary structure comprises 387 residues: Succinate--CoA ligase [ADP-forming] subunit beta (387 aa).

Positions 9–244 constitute an ATP-grasp domain; sequence KQLFASYGLP…VSQEDDRENR (236 aa). ATP is bound by residues K46, 53–55, E99, C102, and E107; that span reads GRG. The Mg(2+) site is built by N199 and D213. Substrate contacts are provided by residues N264 and 321-323; that span reads GIV.

This sequence belongs to the succinate/malate CoA ligase beta subunit family. In terms of assembly, heterotetramer of two alpha and two beta subunits. It depends on Mg(2+) as a cofactor.

The enzyme catalyses succinate + ATP + CoA = succinyl-CoA + ADP + phosphate. The catalysed reaction is GTP + succinate + CoA = succinyl-CoA + GDP + phosphate. It participates in carbohydrate metabolism; tricarboxylic acid cycle; succinate from succinyl-CoA (ligase route): step 1/1. Succinyl-CoA synthetase functions in the citric acid cycle (TCA), coupling the hydrolysis of succinyl-CoA to the synthesis of either ATP or GTP and thus represents the only step of substrate-level phosphorylation in the TCA. The beta subunit provides nucleotide specificity of the enzyme and binds the substrate succinate, while the binding sites for coenzyme A and phosphate are found in the alpha subunit. In Legionella pneumophila (strain Corby), this protein is Succinate--CoA ligase [ADP-forming] subunit beta.